Here is a 54-residue protein sequence, read N- to C-terminus: uncharacterized protein (54 aa).

The helical transmembrane segment at 6–26 (ILIYLLIFVAGIVIGKIRINV) threads the bilayer.

It is found in the host membrane. This is an uncharacterized protein from Acidianus convivator (ABV).